A 121-amino-acid polypeptide reads, in one-letter code: Large ribosomal subunit protein uL18 (121 aa).

This sequence belongs to the universal ribosomal protein uL18 family. As to quaternary structure, part of the 50S ribosomal subunit; part of the 5S rRNA/L5/L18/L25 subcomplex. Contacts the 5S and 23S rRNAs.

This is one of the proteins that bind and probably mediate the attachment of the 5S RNA into the large ribosomal subunit, where it forms part of the central protuberance. The polypeptide is Large ribosomal subunit protein uL18 (Delftia acidovorans (strain DSM 14801 / SPH-1)).